Consider the following 932-residue polypeptide: Protocadherin gamma-A7 (932 aa).

The signal sequence occupies residues 1 to 28 (MAAQPRGGDCRGFVLLSILLGTPWEAWA). 6 Cadherin domains span residues 29–133 (GRIL…VPRF), 134–242 (LTEE…TPVF), 243–347 (SLPQ…APEV), 348–452 (TMTS…PPTF), 453–562 (PHSS…PPEI), and 570–682 (DGST…EPSD). Over 29-692 (GRILYSVSEE…GPYNYDLTLY (664 aa)) the chain is Extracellular. N-linked (GlcNAc...) asparagine glycans are attached at residues asparagine 419 and asparagine 545. The helical transmembrane segment at 693–713 (LVVAVAAVSCVFLAFVLVLLA) threads the bilayer. The Cytoplasmic segment spans residues 714–932 (LRLRRWHKSR…KKKSGKKEKK (219 aa)). Disordered stretches follow at residues 804-841 (VPSIQQAPPNTDWRFSQAQRPGTSGSQNGDDTGTWPNN) and 902-932 (ATLTNAAGKRDGKAPAGGNGNKKKSGKKEKK). The segment covering 806 to 841 (SIQQAPPNTDWRFSQAQRPGTSGSQNGDDTGTWPNN) has biased composition (polar residues). Positions 922–932 (NKKKSGKKEKK) are enriched in basic residues.

The protein localises to the cell membrane. Potential calcium-dependent cell-adhesion protein. May be involved in the establishment and maintenance of specific neuronal connections in the brain. This Pan troglodytes (Chimpanzee) protein is Protocadherin gamma-A7 (PCDHGA7).